Consider the following 451-residue polypeptide: Methionine aminopeptidase 2-2 (451 aa).

The segment at methionine 1–tyrosine 101 is disordered. Acidic residues predominate over residues glutamate 37–alanine 51. Residues lysine 60–alanine 73 show a composition bias toward basic residues. Position 204 (histidine 204) interacts with substrate. The a divalent metal cation site is built by aspartate 224, aspartate 235, and histidine 304. Histidine 312 provides a ligand contact to substrate. A divalent metal cation is bound by residues glutamate 337 and glutamate 432.

It belongs to the peptidase M24A family. Methionine aminopeptidase eukaryotic type 2 subfamily. Co(2+) is required as a cofactor. It depends on Zn(2+) as a cofactor. Mn(2+) serves as cofactor. Requires Fe(2+) as cofactor.

Its subcellular location is the cytoplasm. It carries out the reaction Release of N-terminal amino acids, preferentially methionine, from peptides and arylamides.. In terms of biological role, cotranslationally removes the N-terminal methionine from nascent proteins. The N-terminal methionine is often cleaved when the second residue in the primary sequence is small and uncharged (Met-Ala-, Cys, Gly, Pro, Ser, Thr, or Val). This is Methionine aminopeptidase 2-2 from Pyrenophora tritici-repentis (strain Pt-1C-BFP) (Wheat tan spot fungus).